A 729-amino-acid chain; its full sequence is MSKFIEPSVEEIKLEKVYQDMGLSDQEYEKVCDILGRQPNFTETGIFSVMWSEHCSYKHSKPFLKQFPTSGEHVLMGPGEGAGVVDIGDNQAVVFKVESHNHPSAIEPYQGAATGVGGIIRDIVSIGARPINLLNSLRFGELDNKQNQRLLKGVVKGIGGYGNCIGIPTTAGEIEFDERYDGNPLVNAMCVGVINHDMIQKGTAKGVGNSVIYVGLKTGRDGIHGATFASEELTEESESKRPSVQIGDPFVGKKLMEATLEAITFDELVGIQDMGAAGLTSSSSEMAAKGGSGLHLRLEQVPTREPGISPYEMMLSETQERMLLVVEKGTEQKFLDLFDKHELDSAVIGEVTDTNRFVLTYDDEVYADIPVEPLADEAPVFILEGEEKNYNTSKNDYTHIDVKDTFFKLLKHPTIASKHYLYDQYDQQVGANTIIKPGLQASVVRVEGTNKAIASTIDGEARYVYNNPYEGGKMVVAEAYRNLIAVGATPLAMTDCLNYGSPEKKEIYQQLIDSTKGMAEACDILKTPVVSGNVSLYNETKGTSIFPTPVVGMVGLIENVNYLNDFEPQVGDKLYLIGDTKDDFGGSQLEKLIYGKVNHEFESLDLSSESEKGESIKTAIREGVLSHVQTVGKGGLLITLAKLSAHYGLGLKSSIDITNTQLFSETQGRYVVSVKSGKTLNIDNAIEIGLLTDSDNFKVTTPYTEISENVSDIKQIWEGAIAQCLTTQD.

His-54 is an active-site residue. ATP is bound by residues Tyr-57 and Lys-96. Glu-98 provides a ligand contact to Mg(2+). Residues Ser-99–His-102 and Arg-121 each bind substrate. His-100 functions as the Proton acceptor in the catalytic mechanism. Residue Asp-122 participates in Mg(2+) binding. Gln-245 provides a ligand contact to substrate. Residue Asp-273 participates in Mg(2+) binding. Residue Glu-317–Gln-319 participates in substrate binding. ATP is bound by residues Asp-495 and Gly-532. Asn-533 provides a ligand contact to Mg(2+). Position 535 (Ser-535) interacts with substrate.

It belongs to the FGAMS family. In terms of assembly, monomer. Part of the FGAM synthase complex composed of 1 PurL, 1 PurQ and 2 PurS subunits.

The protein localises to the cytoplasm. The enzyme catalyses N(2)-formyl-N(1)-(5-phospho-beta-D-ribosyl)glycinamide + L-glutamine + ATP + H2O = 2-formamido-N(1)-(5-O-phospho-beta-D-ribosyl)acetamidine + L-glutamate + ADP + phosphate + H(+). It participates in purine metabolism; IMP biosynthesis via de novo pathway; 5-amino-1-(5-phospho-D-ribosyl)imidazole from N(2)-formyl-N(1)-(5-phospho-D-ribosyl)glycinamide: step 1/2. In terms of biological role, part of the phosphoribosylformylglycinamidine synthase complex involved in the purines biosynthetic pathway. Catalyzes the ATP-dependent conversion of formylglycinamide ribonucleotide (FGAR) and glutamine to yield formylglycinamidine ribonucleotide (FGAM) and glutamate. The FGAM synthase complex is composed of three subunits. PurQ produces an ammonia molecule by converting glutamine to glutamate. PurL transfers the ammonia molecule to FGAR to form FGAM in an ATP-dependent manner. PurS interacts with PurQ and PurL and is thought to assist in the transfer of the ammonia molecule from PurQ to PurL. This chain is Phosphoribosylformylglycinamidine synthase subunit PurL, found in Staphylococcus aureus (strain bovine RF122 / ET3-1).